Reading from the N-terminus, the 330-residue chain is Cathepsin K (330 aa).

Residues 1-16 form the signal peptide; the sequence is MWGLEVLLLLPMASFA. Positions 17-115 are cleaved as a propeptide — activation peptide; it reads LYPEEILDTQ…TLYIPDWESR (99 aa). An N-linked (GlcNAc...) asparagine glycan is attached at N104. Intrachain disulfides connect C137–C178, C171–C211, and C270–C319. The active site involves C140. Catalysis depends on residues H277 and N297.

Belongs to the peptidase C1 family.

Its subcellular location is the lysosome. It localises to the secreted. It is found in the apical cell membrane. The catalysed reaction is Broad proteolytic activity. With small-molecule substrates and inhibitors, the major determinant of specificity is P2, which is preferably Leu, Met &gt; Phe, and not Arg.. Thiol protease involved in osteoclastic bone resorption and may participate partially in the disorder of bone remodeling. Displays potent endoprotease activity against fibrinogen at acid pH. May play an important role in extracellular matrix degradation. Involved in the release of thyroid hormone thyroxine (T4) by limited proteolysis of TG/thyroglobulin in the thyroid follicle lumen. The protein is Cathepsin K (CTSK) of Canis lupus familiaris (Dog).